Consider the following 65-residue polypeptide: Large ribosomal subunit protein bL35 (65 aa).

The disordered stretch occupies residues 1-26; sequence MPKMKTHRGAAKRFKKTGSGKLKRAK.

The protein belongs to the bacterial ribosomal protein bL35 family.

This chain is Large ribosomal subunit protein bL35, found in Clostridium novyi (strain NT).